A 431-amino-acid chain; its full sequence is 3-phosphoshikimate 1-carboxyvinyltransferase (431 aa).

3 residues coordinate 3-phosphoshikimate: lysine 21, serine 22, and arginine 26. Position 21 (lysine 21) interacts with phosphoenolpyruvate. Glycine 94 and arginine 122 together coordinate phosphoenolpyruvate. 3-phosphoshikimate-binding residues include serine 167, glutamine 169, aspartate 315, and lysine 342. Glutamine 169 is a phosphoenolpyruvate binding site. Aspartate 315 functions as the Proton acceptor in the catalytic mechanism. Residues arginine 346 and arginine 388 each coordinate phosphoenolpyruvate.

This sequence belongs to the EPSP synthase family. Monomer.

The protein resides in the cytoplasm. It carries out the reaction 3-phosphoshikimate + phosphoenolpyruvate = 5-O-(1-carboxyvinyl)-3-phosphoshikimate + phosphate. It participates in metabolic intermediate biosynthesis; chorismate biosynthesis; chorismate from D-erythrose 4-phosphate and phosphoenolpyruvate: step 6/7. Catalyzes the transfer of the enolpyruvyl moiety of phosphoenolpyruvate (PEP) to the 5-hydroxyl of shikimate-3-phosphate (S3P) to produce enolpyruvyl shikimate-3-phosphate and inorganic phosphate. The chain is 3-phosphoshikimate 1-carboxyvinyltransferase from Pelotomaculum thermopropionicum (strain DSM 13744 / JCM 10971 / SI).